A 273-amino-acid polypeptide reads, in one-letter code: 3-methyl-2-oxobutanoate hydroxymethyltransferase (273 aa).

2 residues coordinate Mg(2+): D53 and D92. Residues 53-54, D92, and K122 contribute to the 3-methyl-2-oxobutanoate site; that span reads DS. E124 is a binding site for Mg(2+). The Proton acceptor role is filled by E191.

Belongs to the PanB family. Homodecamer; pentamer of dimers. The cofactor is Mg(2+).

The protein localises to the cytoplasm. It carries out the reaction 3-methyl-2-oxobutanoate + (6R)-5,10-methylene-5,6,7,8-tetrahydrofolate + H2O = 2-dehydropantoate + (6S)-5,6,7,8-tetrahydrofolate. It participates in cofactor biosynthesis; (R)-pantothenate biosynthesis; (R)-pantoate from 3-methyl-2-oxobutanoate: step 1/2. Catalyzes the reversible reaction in which hydroxymethyl group from 5,10-methylenetetrahydrofolate is transferred onto alpha-ketoisovalerate to form ketopantoate. The chain is 3-methyl-2-oxobutanoate hydroxymethyltransferase from Phocaeicola vulgatus (strain ATCC 8482 / DSM 1447 / JCM 5826 / CCUG 4940 / NBRC 14291 / NCTC 11154) (Bacteroides vulgatus).